The chain runs to 104 residues: Large ribosomal subunit protein uL24 (104 aa).

It belongs to the universal ribosomal protein uL24 family. As to quaternary structure, part of the 50S ribosomal subunit.

Its function is as follows. One of two assembly initiator proteins, it binds directly to the 5'-end of the 23S rRNA, where it nucleates assembly of the 50S subunit. In terms of biological role, one of the proteins that surrounds the polypeptide exit tunnel on the outside of the subunit. This is Large ribosomal subunit protein uL24 from Caulobacter sp. (strain K31).